Here is a 375-residue protein sequence, read N- to C-terminus: MKFELDTTDGRARRGRLVFDRGVVETPAFMPVGTYGTVKGMTPEEVEATGAQIILGNTFHLWLRPGQEIMKLHGDLHDFMQWKGPILTDSGGFQVFSLGDIRKITEQGVHFRNPINGDPIFLDPEKSMEIQYDLGSDIVMIFDECTPYPADWDYAKRSMEMSLRWAKRSRDRFDGLGNKNALFGIIQGSVYEDLRDISVKGLVEIGFDGYAVGGLAVGEPKEDMHRILEHVCPQIPADKPRYLMGVGKPEDLVEGVRRGIDMFDCVMPTRNARNGHLFVTDGVVKIRNAKHKSDTSPLDAECDCYTCRNYSRAYLHHLDRCNEILGARLNTIHNLRYYQRLMAGLRKAIEEGKLESFVTDFYQRQGRPVPPLNVD.

The active-site Proton acceptor is Asp-89. Residues Asp-89–Phe-93, Asp-143, Gln-187, and Gly-214 each bind substrate. The tract at residues Gly-245–Asp-251 is RNA binding. The active-site Nucleophile is the Asp-264. Residues Thr-269–Arg-273 form an RNA binding; important for wobble base 34 recognition region. Zn(2+) contacts are provided by Cys-302, Cys-304, Cys-307, and His-333.

It belongs to the queuine tRNA-ribosyltransferase family. In terms of assembly, homodimer. Within each dimer, one monomer is responsible for RNA recognition and catalysis, while the other monomer binds to the replacement base PreQ1. Zn(2+) serves as cofactor.

The catalysed reaction is 7-aminomethyl-7-carbaguanine + guanosine(34) in tRNA = 7-aminomethyl-7-carbaguanosine(34) in tRNA + guanine. The protein operates within tRNA modification; tRNA-queuosine biosynthesis. Functionally, catalyzes the base-exchange of a guanine (G) residue with the queuine precursor 7-aminomethyl-7-deazaguanine (PreQ1) at position 34 (anticodon wobble position) in tRNAs with GU(N) anticodons (tRNA-Asp, -Asn, -His and -Tyr). Catalysis occurs through a double-displacement mechanism. The nucleophile active site attacks the C1' of nucleotide 34 to detach the guanine base from the RNA, forming a covalent enzyme-RNA intermediate. The proton acceptor active site deprotonates the incoming PreQ1, allowing a nucleophilic attack on the C1' of the ribose to form the product. After dissociation, two additional enzymatic reactions on the tRNA convert PreQ1 to queuine (Q), resulting in the hypermodified nucleoside queuosine (7-(((4,5-cis-dihydroxy-2-cyclopenten-1-yl)amino)methyl)-7-deazaguanosine). The polypeptide is Queuine tRNA-ribosyltransferase (Citrobacter koseri (strain ATCC BAA-895 / CDC 4225-83 / SGSC4696)).